We begin with the raw amino-acid sequence, 370 residues long: ECF RNA polymerase sigma factor SigG (370 aa).

A sigma-70 factor domain-2 region spans residues 63-129 (EPYRRELLAH…LTALEGRRRR (67 aa)). The short motif at 85-88 (DLVQ) is the Polymerase core binding element. The interval 180–232 (LAFVAALQHLSPRQRAVLLLRDVLQWKSAEVADAIGTSTVAVNSLLQRARSQL) is sigma-70 factor domain-4. The H-T-H motif DNA-binding region spans 207-226 (SAEVADAIGTSTVAVNSLLQ).

Belongs to the sigma-70 factor family. ECF subfamily. In terms of assembly, interacts transiently with the RNA polymerase catalytic core formed by RpoA, RpoB, RpoC and RpoZ (2 alpha, 1 beta, 1 beta' and 1 omega subunit) to form the RNA polymerase holoenzyme that can initiate transcription.

Sigma factors are initiation factors that promote the attachment of RNA polymerase to specific initiation sites and are then released. Extracytoplasmic function (ECF) sigma factors are held in an inactive form by a cognate anti-sigma factor until released, although no anti-sigma factor is known for this protein. May be involved in host intracellular survival after infection (strains H37Rv and CDC 1551). A role in the SOS response is controversial; it has been seen in strain CDC 1551 but not in H37Rv. This Mycobacterium tuberculosis (strain CDC 1551 / Oshkosh) protein is ECF RNA polymerase sigma factor SigG (sigG).